Here is a 741-residue protein sequence, read N- to C-terminus: Hemolysin (741 aa).

An N-terminal signal peptide occupies residues 1 to 25; that stretch reads MPKLNRCAIAIFTILSAISSPTLLA. The propeptide occupies 26-157; the sequence is NINEPSGEAA…RSGFASPAPA (132 aa). Cystine bridges form between Cys-182–Cys-200, Cys-497–Cys-511, and Cys-537–Cys-549. The 92-residue stretch at 484–575 folds into the Ricin B-type lectin domain; sequence RPVNLQLASF…LTNVYSGESL (92 aa). The segment at 607-741 is beta-prism domain; sequence NAQESSPILG…LVKGVQFDLN (135 aa).

The protein belongs to the HlyA hemolysin family. In terms of assembly, monomer. Homoheptamer. After binding to target membranes the protein assembles into a heptameric pre-pore complex. Proteolytic cleavage triggers a conformation change that is required for membrane insertion and pore formation. Post-translationally, proteolytical cleavage is required to convert the 80 kDa hemolysin precursor into the active 65 kDa hemolysin.

It localises to the secreted. The protein resides in the host cell membrane. Functionally, bacterial hemolysin that causes cytolysis by forming heptameric pores in target host membranes. The sequence is that of Hemolysin (hlyA) from Vibrio cholerae serotype O1 (strain ATCC 39315 / El Tor Inaba N16961).